Consider the following 43-residue polypeptide: uncharacterized protein (43 aa).

Belongs to the ELIP/psbS family.

The protein localises to the plastid. The protein resides in the chloroplast. In terms of biological role, possible role in chlorophyll and/or carotenoid binding. This is an uncharacterized protein from Cyanidium caldarium (Red alga).